The sequence spans 423 residues: Cyclin-dependent kinase 14 (423 aa).

Residues 62 to 85 are disordered; it reads VGKESPKVRRHSSPSSPTSPKFGK. In terms of domain architecture, Protein kinase spans 89–373; that stretch reads YEKLEKLGEG…AQAALNHDYF (285 aa). ATP-binding positions include 95 to 103 and Lys-118; that span reads LGEGSYATV. The active-site Proton acceptor is Asp-210.

It belongs to the protein kinase superfamily. CMGC Ser/Thr protein kinase family. CDC2/CDKX subfamily. In terms of assembly, interacts with ccny; ccny mediates its recruitment to the plasma membrane and promotes phosphorylation of lrp6.

It is found in the cell membrane. The catalysed reaction is L-seryl-[protein] + ATP = O-phospho-L-seryl-[protein] + ADP + H(+). The enzyme catalyses L-threonyl-[protein] + ATP = O-phospho-L-threonyl-[protein] + ADP + H(+). In terms of biological role, serine/threonine-protein kinase involved in the control of the eukaryotic cell cycle, whose activity is controlled by an associated cyclin. Acts as a cell-cycle regulator of Wnt signaling pathway during G2/M phase by mediating the phosphorylation of lrp6, leading to the activation of the Wnt signaling pathway. In Xenopus tropicalis (Western clawed frog), this protein is Cyclin-dependent kinase 14 (cdk14).